The sequence spans 198 residues: Molybdopterin synthase catalytic subunit (198 aa).

Substrate is bound by residues 107–108, lysine 123, and 130–132; these read HR and KKE.

Belongs to the MoaE family. MOCS2B subfamily. In terms of assembly, heterotetramer; composed of 2 small (MOCS2A) and 2 large (MOCS2B) subunits.

The protein localises to the cytoplasm. It carries out the reaction 2 [molybdopterin-synthase sulfur-carrier protein]-C-terminal-Gly-aminoethanethioate + cyclic pyranopterin phosphate + H2O = molybdopterin + 2 [molybdopterin-synthase sulfur-carrier protein]-C-terminal Gly-Gly + 2 H(+). Its pathway is cofactor biosynthesis; molybdopterin biosynthesis. In terms of biological role, catalytic subunit of the molybdopterin synthase complex, a complex that catalyzes the conversion of precursor Z into molybdopterin. Acts by mediating the incorporation of 2 sulfur atoms from thiocarboxylated MOCS2A into precursor Z to generate a dithiolene group. The sequence is that of Molybdopterin synthase catalytic subunit from Arabidopsis thaliana (Mouse-ear cress).